Consider the following 77-residue polypeptide: DNA-directed RNA polymerase subunit epsilon (77 aa).

This sequence belongs to the RNA polymerase subunit epsilon family. As to quaternary structure, RNAP is composed of a core of 2 alpha, a beta and a beta' subunit. The core is associated with a delta subunit, and at least one of epsilon or omega. When a sigma factor is associated with the core the holoenzyme is formed, which can initiate transcription.

The catalysed reaction is RNA(n) + a ribonucleoside 5'-triphosphate = RNA(n+1) + diphosphate. A non-essential component of RNA polymerase (RNAP). In Streptococcus pneumoniae serotype 2 (strain D39 / NCTC 7466), this protein is DNA-directed RNA polymerase subunit epsilon.